Consider the following 1308-residue polypeptide: MKFSKQLSAQADLRYLNEYISYKDLKKAIKVITGSDVQVCTVQDVVSNFRQTNALTGSIFRPPESRFQELLNHELDKINSFSKREVEAILDQLAVALVIMWRLHAALTLLRLAPDSPGYAEAQALLKRLEQREQEIRNALVVYPQKRGRATEQDKAGSPSSNPRCRGVSDEPSSSSEERELGAEGDDFSSAGGKTSSRGEGDAKRRQGDEDGGEGEQDDAKRSVAEALILLEKDVLEVEGVLEAQSQEIVFLDSFVRLNFTGFRKITKKYDKHNQSSAASWYMSRVVRQDFMNLNFTLLLTRLARCYVALRSLRRRLGEQQQQSLSISPADDPSKAASVKEDRSTVGSFSQSLGPEGARLSTYKRTGGSDEGEQRREPRFSLAARSRGSRDCREDIKVTKYLIAPDELMKVKVLILKHLPLLAAGGIPMDDSVLCPFENSSQAVAAEDFSAALEAAASLLRTSGTASDKREARQSLGGSRVPTWEVYLDNEEFTYYTNTRTRRDSPDSCRGVAPSRRVVRVRWQGLPSLNSAGRQVALELSRPDSSIADPQEDITTPLASNAPDVASSAFTVILRQKQLLQLLHGLITPSKLLDQLMDEMEASAAGVATGEGANATAASHRTGARGAANRGEGSGGGGGNRGSDDRAVALTKQKRKADMLQVLQTVWDAVQQRGVSPSVRTWFYRTEFMSEDGVAWISVDEDIRFSREMNRTPPANQWIRSETEALSTDDVHPFPWGLLDVSFLVRDNGVALPQHAVQQAKDFHPLVGRDDLEDFVADLRGLSTLTEVPGFSLFAHGTAYFYTPRLQALQARMSGYEQAVHLIPLWLQYTTNAEFDDDASQVFDEATEGGKGKKADRTSVGQSRLGRNQGDSAERGQRAGSPGGLSRPRVCHRGSVIDVVHQGTSASLVHDLQASAQVSPPTSSGVDQLGNSHRPSVSESRHPSAPALSVLASAPSLPMPAPPLLEVSPFQSGARGLLTQPLLDDGDRMAGERQSASRGGAPTPSQSWLLTGARYWRRYCNCFSLSGSAGRRRRSMSCLFPWSQRSSARRIHPVGPRSMVAGGVTSGPSVRVEPKTFFANERTLLQWMNTAVLIATISITLMNFGNPVGRIAGLLMSPVAVFFIGYSFWVYLRRARALERKEPIAYNDKLGPSILVVTLMLSLSAVIALNLLYHEGEAQLPITPQNSSTSTAPSLPPSPHALPLLSQLNVSHSQAAYKAPSAPNATVNAGGYSVADVPAPDFSLSHPATAYAAATALAAAEAAAAAGPVSFAGAPERAVHAHVTEAMTHAASAETAAAEGARVTAGAK.

The 284-residue stretch at 1–284 (MKFSKQLSAQ…QSSAASWYMS (284 aa)) folds into the SPX domain. Over 1–1083 (MKFSKQLSAQ…PKTFFANERT (1083 aa)) the chain is Cytoplasmic. The disordered stretch occupies residues 144–220 (PQKRGRATEQ…DGGEGEQDDA (77 aa)). The segment covering 197–209 (SRGEGDAKRRQGD) has biased composition (basic and acidic residues). The segment at 265 to 272 (KITKKYDK) is important for inositol polyphosphate binding. Disordered regions lie at residues 321–384 (QQQS…SLAA), 611–645 (EGAN…GSDD), 846–890 (ATEG…RPRV), 915–946 (SAQV…PSAP), and 981–1004 (PLLD…APTP). A compositionally biased stretch (basic and acidic residues) spans 332-344 (DPSKAASVKEDRS). The segment covering 632-641 (EGSGGGGGNR) has biased composition (gly residues). Over residues 848-857 (EGGKGKKADR) the composition is skewed to basic and acidic residues. 2 stretches are compositionally biased toward polar residues: residues 859–871 (SVGQ…NQGD) and 915–938 (SAQV…PSVS). The helical transmembrane segment at 1084-1104 (LLQWMNTAVLIATISITLMNF) threads the bilayer. The Vacuolar portion of the chain corresponds to 1105–1110 (GNPVGR). Residues 1111–1131 (IAGLLMSPVAVFFIGYSFWVY) form a helical membrane-spanning segment. At 1132-1152 (LRRARALERKEPIAYNDKLGP) the chain is on the cytoplasmic side. A helical membrane pass occupies residues 1153 to 1173 (SILVVTLMLSLSAVIALNLLY). Residues 1174-1308 (HEGEAQLPIT…EGARVTAGAK (135 aa)) are Vacuolar-facing.

It belongs to the VTC2/3 family. The VTC core complex is an integral membrane heterooligomer composed of at least the catalytic subunit vtc4 and the accessory subunits vtc1 and vtc2. vtc1 is a small membrane protein without hydrophilic domain. Vtc2 and vtc4 are related and have 2 hydrophilic domains that face the cytosol, an N-terminal SPX domain and the central core domain. The central core in vtc4 is the catalytic domain.

It is found in the vacuole membrane. Accessory subunit of the vacuolar transporter chaperone (VTC) complex. The VTC complex acts as a vacuolar polyphosphate polymerase that catalyzes the synthesis of inorganic polyphosphate (polyP) via transfer of phosphate from ATP to a growing polyP chain, releasing ADP. VTC exposes its catalytic domain vtc4 to the cytosol, where the growing polyP chain winds through a tunnel-shaped pocket, integrating cytoplasmic polymer synthesis with polyP membrane translocation. The VTC complex carries 9 vacuolar transmembrane domains, which are likely to constitute the translocation channel into the organelle lumen. PolyP synthesis is tightly coupled to its transport into the vacuole lumen, in order to avoid otherwise toxic intermediates in the cytosol, and it depends on the proton gradient across the membrane, formed by V-ATPase. The VTC complex also plays a role in vacuolar membrane fusion. This chain is Vacuolar transporter chaperone complex subunit 2 (vtc2), found in Toxoplasma gondii (strain ATCC 50611 / Me49).